The primary structure comprises 140 residues: Tumor protein D55 (140 aa).

The segment at 1–28 (MPHARTETSVGTYESHSTSELEDLTEPE) is disordered. A compositionally biased stretch (polar residues) spans 7-18 (ETSVGTYESHST). A coiled-coil region spans residues 28-57 (EQRELKTKLTKLEAEIVTLRHVLAAKERRC).

This sequence belongs to the TPD52 family. Interacts with TPD52L2. Specifically expressed in testis. Expressed at 5.6-fold higher levels in adult testis than in fetal testis.

This is Tumor protein D55 (TPD52L3) from Homo sapiens (Human).